The following is a 289-amino-acid chain: Pyridoxal kinase PdxY (289 aa).

Substrate contacts are provided by residues Ser-9 and Thr-44–Gln-45. ATP-binding residues include Asp-112, Val-144, Glu-149, and Lys-182. A substrate-binding site is contributed by Asp-221.

It belongs to the pyridoxine kinase family. PdxY subfamily. Homodimer. Requires Mg(2+) as cofactor.

The catalysed reaction is pyridoxal + ATP = pyridoxal 5'-phosphate + ADP + H(+). The protein operates within cofactor metabolism; pyridoxal 5'-phosphate salvage; pyridoxal 5'-phosphate from pyridoxal: step 1/1. Pyridoxal kinase involved in the salvage pathway of pyridoxal 5'-phosphate (PLP). Catalyzes the phosphorylation of pyridoxal to PLP. The protein is Pyridoxal kinase PdxY of Vibrio campbellii (strain ATCC BAA-1116).